Here is a 204-residue protein sequence, read N- to C-terminus: Ribonuclease HII (204 aa).

The RNase H type-2 domain occupies 14–203 (VGLCGVDEAG…VRLLLDQTSL (190 aa)). Residues Asp20, Glu21, and Asp112 each contribute to the a divalent metal cation site.

This sequence belongs to the RNase HII family. Requires Mn(2+) as cofactor. It depends on Mg(2+) as a cofactor.

It localises to the cytoplasm. The catalysed reaction is Endonucleolytic cleavage to 5'-phosphomonoester.. Endonuclease that specifically degrades the RNA of RNA-DNA hybrids. This is Ribonuclease HII from Thiobacillus denitrificans (strain ATCC 25259 / T1).